The sequence spans 271 residues: Putative phosphoenolpyruvate synthase regulatory protein (271 aa).

Position 151–158 (151–158 (GVSRSGKT)) interacts with ADP.

The protein belongs to the pyruvate, phosphate/water dikinase regulatory protein family. PSRP subfamily.

It catalyses the reaction [pyruvate, water dikinase] + ADP = [pyruvate, water dikinase]-phosphate + AMP + H(+). The enzyme catalyses [pyruvate, water dikinase]-phosphate + phosphate + H(+) = [pyruvate, water dikinase] + diphosphate. Functionally, bifunctional serine/threonine kinase and phosphorylase involved in the regulation of the phosphoenolpyruvate synthase (PEPS) by catalyzing its phosphorylation/dephosphorylation. The chain is Putative phosphoenolpyruvate synthase regulatory protein from Burkholderia multivorans (strain ATCC 17616 / 249).